The sequence spans 97 residues: YcgL domain-containing protein PSPTO_3921 (97 aa).

The YcgL domain occupies 3–87; that stretch reads RICSIYRSPK…AEDEYIEHLP (85 aa).

The chain is YcgL domain-containing protein PSPTO_3921 from Pseudomonas syringae pv. tomato (strain ATCC BAA-871 / DC3000).